The chain runs to 293 residues: Urease accessory protein UreD 2 (293 aa).

Belongs to the UreD family. In terms of assembly, ureD, UreF and UreG form a complex that acts as a GTP-hydrolysis-dependent molecular chaperone, activating the urease apoprotein by helping to assemble the nickel containing metallocenter of UreC. The UreE protein probably delivers the nickel.

The protein resides in the cytoplasm. Its function is as follows. Required for maturation of urease via the functional incorporation of the urease nickel metallocenter. This is Urease accessory protein UreD 2 from Streptomyces griseus subsp. griseus (strain JCM 4626 / CBS 651.72 / NBRC 13350 / KCC S-0626 / ISP 5235).